Consider the following 569-residue polypeptide: Beta-lactamase-like protein 4 (569 aa).

The N-terminal stretch at 1–19 (MKYYLYLFLLFTFANLLYS) is a signal peptide. N87, N172, N239, N240, N250, N299, N343, N412, N419, N436, N468, N509, and N535 each carry an N-linked (GlcNAc...) asparagine glycan.

This sequence belongs to the beta-lactamase family.

The protein resides in the secreted. This chain is Beta-lactamase-like protein 4, found in Dictyostelium discoideum (Social amoeba).